The following is a 554-amino-acid chain: Dihydroxy-acid dehydratase (554 aa).

D78 is a Mg(2+) binding site. C119 is a [2Fe-2S] cluster binding site. Residues D120 and K121 each contribute to the Mg(2+) site. The residue at position 121 (K121) is an N6-carboxylysine. C191 contacts [2Fe-2S] cluster. A Mg(2+)-binding site is contributed by E444. Residue S470 is the Proton acceptor of the active site.

This sequence belongs to the IlvD/Edd family. As to quaternary structure, homodimer. The cofactor is [2Fe-2S] cluster. Mg(2+) is required as a cofactor.

The enzyme catalyses (2R)-2,3-dihydroxy-3-methylbutanoate = 3-methyl-2-oxobutanoate + H2O. It catalyses the reaction (2R,3R)-2,3-dihydroxy-3-methylpentanoate = (S)-3-methyl-2-oxopentanoate + H2O. The protein operates within amino-acid biosynthesis; L-isoleucine biosynthesis; L-isoleucine from 2-oxobutanoate: step 3/4. It participates in amino-acid biosynthesis; L-valine biosynthesis; L-valine from pyruvate: step 3/4. Functions in the biosynthesis of branched-chain amino acids. Catalyzes the dehydration of (2R,3R)-2,3-dihydroxy-3-methylpentanoate (2,3-dihydroxy-3-methylvalerate) into 2-oxo-3-methylpentanoate (2-oxo-3-methylvalerate) and of (2R)-2,3-dihydroxy-3-methylbutanoate (2,3-dihydroxyisovalerate) into 2-oxo-3-methylbutanoate (2-oxoisovalerate), the penultimate precursor to L-isoleucine and L-valine, respectively. The sequence is that of Dihydroxy-acid dehydratase from Nitratidesulfovibrio vulgaris (strain DP4) (Desulfovibrio vulgaris).